The primary structure comprises 105 residues: Pyrimidine/purine nucleoside phosphorylase (105 aa).

Belongs to the nucleoside phosphorylase PpnP family.

It carries out the reaction a purine D-ribonucleoside + phosphate = a purine nucleobase + alpha-D-ribose 1-phosphate. It catalyses the reaction adenosine + phosphate = alpha-D-ribose 1-phosphate + adenine. The enzyme catalyses cytidine + phosphate = cytosine + alpha-D-ribose 1-phosphate. The catalysed reaction is guanosine + phosphate = alpha-D-ribose 1-phosphate + guanine. It carries out the reaction inosine + phosphate = alpha-D-ribose 1-phosphate + hypoxanthine. It catalyses the reaction thymidine + phosphate = 2-deoxy-alpha-D-ribose 1-phosphate + thymine. The enzyme catalyses uridine + phosphate = alpha-D-ribose 1-phosphate + uracil. The catalysed reaction is xanthosine + phosphate = alpha-D-ribose 1-phosphate + xanthine. In terms of biological role, catalyzes the phosphorolysis of diverse nucleosides, yielding D-ribose 1-phosphate and the respective free bases. Can use uridine, adenosine, guanosine, cytidine, thymidine, inosine and xanthosine as substrates. Also catalyzes the reverse reactions. This chain is Pyrimidine/purine nucleoside phosphorylase, found in Ralstonia nicotianae (strain ATCC BAA-1114 / GMI1000) (Ralstonia solanacearum).